The sequence spans 1070 residues: Phosphatidylinositol 4,5-bisphosphate 3-kinase catalytic subunit beta isoform (1070 aa).

Residues 26-115 form the PI3K-ABD domain; it reads SDGSISVDFL…LPVLKLVTRS (90 aa). One can recognise a PI3K-RBD domain in the interval 194–285; the sequence is GGKLVVAVHF…RTLPHFILVE (92 aa). Serine 324 bears the Phosphoserine mark. The C2 PI3K-type domain occupies 327-496; sequence WGNNNPFQIV…NATALHIKFP (170 aa). Residues 410–418 carry the Nuclear localization signal (NLS) motif; sequence KVKTKKSTK. The 178-residue stretch at 524-701 folds into the PIK helical domain; sequence ANVSSRGGKK…GVILEAYCRG (178 aa). The PI3K/PI4K catalytic domain occupies 772-1053; it reads YVEKCRYMDS…KFDEALRESW (282 aa). The segment at 778 to 784 is G-loop; the sequence is YMDSKMK. A catalytic loop region spans residues 916–924; that stretch reads GIGDRHSDN. Residues 935–961 form an activation loop region; it reads HIDFGHILGNFKSKFGIKRERVPFILT. Phosphoserine; by autocatalysis is present on serine 1070.

The protein belongs to the PI3/PI4-kinase family. Heterodimer of a catalytic subunit PIK3CB and a p85 regulatory subunit (PIK3R1, PIK3R2 or PIK3R3). Interaction with PIK3R2 is required for nuclear localization and nuclear export. Part of a complex with PIK3R1 and PTEN. Binding to PTEN may antagonize the lipid kinase activity under normal growth conditions. Part of a complex involved in autophagosome formation composed of PIK3C3 and PIK3R4. Interacts with BECN1, ATG14 and RAB5A. Post-translationally, autophosphorylation at Ser-1070 negatively regulates the phosphatidylinositol-4,5-bisphosphate 3-kinase activity.

The protein localises to the cytoplasm. The protein resides in the nucleus. It carries out the reaction a 1,2-diacyl-sn-glycero-3-phospho-(1D-myo-inositol-4,5-bisphosphate) + ATP = a 1,2-diacyl-sn-glycero-3-phospho-(1D-myo-inositol-3,4,5-trisphosphate) + ADP + H(+). It catalyses the reaction 1-octadecanoyl-2-(5Z,8Z,11Z,14Z)-eicosatetraenoyl-sn-glycero-3-phospho-1D-myo-inositol 4,5-bisphosphate + ATP = 1-octadecanoyl-2-(5Z,8Z,11Z,14Z-eicosatetraenoyl)-sn-glycero-3-phospho-(1D-myo-inositol 3,4,5-triphosphate) + ADP + H(+). The catalysed reaction is L-seryl-[protein] + ATP = O-phospho-L-seryl-[protein] + ADP + H(+). The protein operates within phospholipid metabolism; phosphatidylinositol phosphate biosynthesis. Its function is as follows. Phosphoinositide-3-kinase (PI3K) phosphorylates phosphatidylinositol (PI) derivatives at position 3 of the inositol ring to produce 3-phosphoinositides. Uses ATP and PtdIns(4,5)P2 (phosphatidylinositol 4,5-bisphosphate) to generate phosphatidylinositol 3,4,5-trisphosphate (PIP3). PIP3 plays a key role by recruiting PH domain-containing proteins to the membrane, including AKT1 and PDPK1, activating signaling cascades involved in cell growth, survival, proliferation, motility and morphology. Involved in the activation of AKT1 upon stimulation by G-protein coupled receptors (GPCRs) ligands such as CXCL12, sphingosine 1-phosphate, and lysophosphatidic acid. May also act downstream receptor tyrosine kinases. Required in different signaling pathways for stable platelet adhesion and aggregation. Plays a role in platelet activation signaling triggered by GPCRs, alpha-IIb/beta-3 integrins (ITGA2B/ ITGB3) and ITAM (immunoreceptor tyrosine-based activation motif)-bearing receptors such as GP6. Regulates the strength of adhesion of ITGA2B/ ITGB3 activated receptors necessary for the cellular transmission of contractile forces. Required for platelet aggregation induced by F2 (thrombin) and thromboxane A2 (TXA2). Has a role in cell survival. May have a role in cell migration. Involved in the early stage of autophagosome formation. Modulates the intracellular level of PtdIns3P (phosphatidylinositol 3-phosphate) and activates PIK3C3 kinase activity. May act as a scaffold, independently of its lipid kinase activity to positively regulate autophagy. May have a role in insulin signaling as scaffolding protein in which the lipid kinase activity is not required. May have a kinase-independent function in regulating cell proliferation and in clathrin-mediated endocytosis. Mediator of oncogenic signal in cell lines lacking PTEN. The lipid kinase activity is necessary for its role in oncogenic transformation. Required for the growth of ERBB2 and RAS driven tumors. Also has a protein kinase activity showing autophosphorylation. This is Phosphatidylinositol 4,5-bisphosphate 3-kinase catalytic subunit beta isoform (Pik3cb) from Rattus norvegicus (Rat).